The chain runs to 334 residues: Glycerol-3-phosphate dehydrogenase [NAD(P)+] 2 (334 aa).

Positions 16, 36, 37, and 110 each coordinate NADPH. Residues K110 and G140 each coordinate sn-glycerol 3-phosphate. A144 provides a ligand contact to NADPH. Residues K195, D248, S258, R259, and N260 each contribute to the sn-glycerol 3-phosphate site. The active-site Proton acceptor is the K195. An NADPH-binding site is contributed by R259. NADPH is bound by residues V282 and E284.

This sequence belongs to the NAD-dependent glycerol-3-phosphate dehydrogenase family.

Its subcellular location is the cytoplasm. The catalysed reaction is sn-glycerol 3-phosphate + NAD(+) = dihydroxyacetone phosphate + NADH + H(+). The enzyme catalyses sn-glycerol 3-phosphate + NADP(+) = dihydroxyacetone phosphate + NADPH + H(+). It participates in membrane lipid metabolism; glycerophospholipid metabolism. Catalyzes the reduction of the glycolytic intermediate dihydroxyacetone phosphate (DHAP) to sn-glycerol 3-phosphate (G3P), the key precursor for phospholipid synthesis. The polypeptide is Glycerol-3-phosphate dehydrogenase [NAD(P)+] 2 (Mycobacterium tuberculosis (strain ATCC 25618 / H37Rv)).